The sequence spans 195 residues: Protein GrpE (195 aa).

Belongs to the GrpE family. In terms of assembly, homodimer.

The protein resides in the cytoplasm. Functionally, participates actively in the response to hyperosmotic and heat shock by preventing the aggregation of stress-denatured proteins, in association with DnaK and GrpE. It is the nucleotide exchange factor for DnaK and may function as a thermosensor. Unfolded proteins bind initially to DnaJ; upon interaction with the DnaJ-bound protein, DnaK hydrolyzes its bound ATP, resulting in the formation of a stable complex. GrpE releases ADP from DnaK; ATP binding to DnaK triggers the release of the substrate protein, thus completing the reaction cycle. Several rounds of ATP-dependent interactions between DnaJ, DnaK and GrpE are required for fully efficient folding. The sequence is that of Protein GrpE from Francisella tularensis subsp. holarctica (strain FTNF002-00 / FTA).